The primary structure comprises 393 residues: S-adenosylmethionine synthase (393 aa).

E10 is a Mg(2+) binding site. H16 lines the ATP pocket. E44 is a binding site for K(+). Positions 57 and 100 each coordinate L-methionine. ATP-binding positions include 168-170 (DGK), 236-239 (SGRF), D247, 253-254 (RK), A270, K274, and K278. D247 contributes to the L-methionine binding site. K278 is an L-methionine binding site.

This sequence belongs to the AdoMet synthase family. As to quaternary structure, homotetramer. It depends on Mn(2+) as a cofactor. The cofactor is Mg(2+). Co(2+) serves as cofactor. K(+) is required as a cofactor.

Its subcellular location is the cytoplasm. The enzyme catalyses L-methionine + ATP + H2O = S-adenosyl-L-methionine + phosphate + diphosphate. Its pathway is amino-acid biosynthesis; S-adenosyl-L-methionine biosynthesis; S-adenosyl-L-methionine from L-methionine: step 1/1. Its function is as follows. Catalyzes the formation of S-adenosylmethionine from methionine and ATP. The reaction comprises two steps that are both catalyzed by the same enzyme: formation of S-adenosylmethionine (AdoMet) and triphosphate, and subsequent hydrolysis of the triphosphate. This is S-adenosylmethionine synthase (METK) from Musa acuminata (Banana).